The chain runs to 314 residues: tRNA dimethylallyltransferase 2 (314 aa).

Gly8–Ser15 contacts ATP. A substrate-binding site is contributed by Thr10 to Ser15.

Belongs to the IPP transferase family. As to quaternary structure, monomer. The cofactor is Mg(2+).

The enzyme catalyses adenosine(37) in tRNA + dimethylallyl diphosphate = N(6)-dimethylallyladenosine(37) in tRNA + diphosphate. Its function is as follows. Catalyzes the transfer of a dimethylallyl group onto the adenine at position 37 in tRNAs that read codons beginning with uridine, leading to the formation of N6-(dimethylallyl)adenosine (i(6)A). This Mycobacterium ulcerans (strain Agy99) protein is tRNA dimethylallyltransferase 2.